A 264-amino-acid polypeptide reads, in one-letter code: Thiazole synthase (264 aa).

Residue lysine 106 is the Schiff-base intermediate with DXP of the active site. Residues glycine 167, 193 to 194, and 215 to 216 contribute to the 1-deoxy-D-xylulose 5-phosphate site; these read AG and NS.

It belongs to the ThiG family. As to quaternary structure, homotetramer. Forms heterodimers with either ThiH or ThiS.

Its subcellular location is the cytoplasm. The catalysed reaction is [ThiS sulfur-carrier protein]-C-terminal-Gly-aminoethanethioate + 2-iminoacetate + 1-deoxy-D-xylulose 5-phosphate = [ThiS sulfur-carrier protein]-C-terminal Gly-Gly + 2-[(2R,5Z)-2-carboxy-4-methylthiazol-5(2H)-ylidene]ethyl phosphate + 2 H2O + H(+). It participates in cofactor biosynthesis; thiamine diphosphate biosynthesis. In terms of biological role, catalyzes the rearrangement of 1-deoxy-D-xylulose 5-phosphate (DXP) to produce the thiazole phosphate moiety of thiamine. Sulfur is provided by the thiocarboxylate moiety of the carrier protein ThiS. In vitro, sulfur can be provided by H(2)S. The chain is Thiazole synthase from Ectopseudomonas mendocina (strain ymp) (Pseudomonas mendocina).